A 346-amino-acid chain; its full sequence is Anthranilate phosphoribosyltransferase (346 aa).

5-phospho-alpha-D-ribose 1-diphosphate is bound by residues Gly81, Gly84–Asp85, Asn91–Thr94, Lys109–Ser117, and Ser121. Gly81 serves as a coordination point for anthranilate. Ser93 contributes to the Mg(2+) binding site. Anthranilate is bound at residue Arg167. Mg(2+) is bound by residues Asp226 and Glu227.

This sequence belongs to the anthranilate phosphoribosyltransferase family. As to quaternary structure, homodimer. Mg(2+) is required as a cofactor.

The enzyme catalyses N-(5-phospho-beta-D-ribosyl)anthranilate + diphosphate = 5-phospho-alpha-D-ribose 1-diphosphate + anthranilate. The protein operates within amino-acid biosynthesis; L-tryptophan biosynthesis; L-tryptophan from chorismate: step 2/5. Catalyzes the transfer of the phosphoribosyl group of 5-phosphorylribose-1-pyrophosphate (PRPP) to anthranilate to yield N-(5'-phosphoribosyl)-anthranilate (PRA). In Marinomonas sp. (strain MWYL1), this protein is Anthranilate phosphoribosyltransferase.